The primary structure comprises 275 residues: MRKVLRVKKNIKIARIVPLVLLLVACGRGEVTAQSSSGWDQLVYLFARAIQWLSFDGSIGVGIILFTLTIRLMLMPLFNMQIKSSQKMQDIQPELRELQRKYAGKDTQTRMKLAEESQALYKKYGVNPYASLLPLLIQMPVMIALFQALTRVSFLKTGTFLWVELAQHDHLYLLPVLAAVFTFLSTWLTNLAAKEKNVMMTVMIYVMPLMIFFMGFNLASGVVLYWTVSNAFQVVQLLLLNNPFKIIAERQRLANEEKERRLRERRARKKAMKRK.

A signal peptide spans 1–25 (MRKVLRVKKNIKIARIVPLVLLLVA). A lipid anchor (N-palmitoyl cysteine) is attached at Cys-26. A lipid anchor (S-diacylglycerol cysteine) is attached at Cys-26. 5 consecutive transmembrane segments (helical) span residues 58–78 (SIGVGIILFTLTIRLMLMPLF), 129–149 (YASLLPLLIQMPVMIALFQAL), 171–191 (LYLLPVLAAVFTFLSTWLTNL), 198–216 (VMMTVMIYVMPLMIFFMGF), and 222–240 (VVLYWTVSNAFQVVQLLLL).

It belongs to the OXA1/ALB3/YidC family. Type 2 subfamily.

It is found in the cell membrane. Its function is as follows. Required for the insertion and/or proper folding and/or complex formation of integral membrane proteins into the membrane. Involved in integration of membrane proteins that insert both dependently and independently of the Sec translocase complex, as well as at least some lipoproteins. The protein is Membrane protein insertase YidC 1 of Streptococcus pyogenes serotype M1.